Reading from the N-terminus, the 433-residue chain is Enolase (433 aa).

Gln167 lines the (2R)-2-phosphoglycerate pocket. The active-site Proton donor is the Glu209. The Mg(2+) site is built by Asp246, Glu291, and Asp318. Positions 343, 372, 373, and 394 each coordinate (2R)-2-phosphoglycerate. Lys343 functions as the Proton acceptor in the catalytic mechanism.

Belongs to the enolase family. Component of the RNA degradosome, a multiprotein complex involved in RNA processing and mRNA degradation. The cofactor is Mg(2+).

The protein localises to the cytoplasm. It is found in the secreted. It localises to the cell surface. It catalyses the reaction (2R)-2-phosphoglycerate = phosphoenolpyruvate + H2O. The protein operates within carbohydrate degradation; glycolysis; pyruvate from D-glyceraldehyde 3-phosphate: step 4/5. In terms of biological role, catalyzes the reversible conversion of 2-phosphoglycerate (2-PG) into phosphoenolpyruvate (PEP). It is essential for the degradation of carbohydrates via glycolysis. The polypeptide is Enolase (Aeromonas hydrophila subsp. hydrophila (strain ATCC 7966 / DSM 30187 / BCRC 13018 / CCUG 14551 / JCM 1027 / KCTC 2358 / NCIMB 9240 / NCTC 8049)).